The primary structure comprises 170 residues: Adenine phosphoribosyltransferase (170 aa).

The protein belongs to the purine/pyrimidine phosphoribosyltransferase family. As to quaternary structure, homodimer.

It is found in the cytoplasm. The enzyme catalyses AMP + diphosphate = 5-phospho-alpha-D-ribose 1-diphosphate + adenine. It participates in purine metabolism; AMP biosynthesis via salvage pathway; AMP from adenine: step 1/1. In terms of biological role, catalyzes a salvage reaction resulting in the formation of AMP, that is energically less costly than de novo synthesis. This chain is Adenine phosphoribosyltransferase, found in Thermotoga petrophila (strain ATCC BAA-488 / DSM 13995 / JCM 10881 / RKU-1).